Reading from the N-terminus, the 152-residue chain is Dynein light chain Tctex-type protein 2B (152 aa).

It belongs to the dynein light chain Tctex-type family. As to quaternary structure, light chain of the cytoplasmic dynein complex 2, a multisubunit complex composed at least of eleven different proteins. The cytoplasmic dynein 2 complex consists of two catalytic heavy chains (HCs) and a number of non-catalytic subunits presented by intermediate chains (ICs), light intermediate chains (LICs) and light chains (LCs). Among them, a heavy chain (DYNC2H1), two intermediate chains (DYNC2I2 and DYNC2I1), a light intermediate chain (DYNC2LI1), and a light chain (DYNLT2B) are unique to the dynein-2 complex, but a subset of the light chains are also shared by dynein-1 and dynein-2 complexes. The dimer DYNLT2B-DYNLT1/DYNLT3 interacts with DYNC2I1; this interaction is crucial for retrograde trafficking of ciliary proteins.

The protein localises to the dynein axonemal particle. Functionally, acts as one of several non-catalytic accessory components of the cytoplasmic dynein 2 complex (dynein-2 complex), a motor protein complex that drives the movement of cargos along microtubules within cilia and flagella in concert with the intraflagellar transport (IFT) system. Required for proper retrograde ciliary transport. The protein is Dynein light chain Tctex-type protein 2B (DYNLT2B) of Bos taurus (Bovine).